A 161-amino-acid polypeptide reads, in one-letter code: Endoribonuclease YbeY (161 aa).

Residues histidine 121, histidine 125, and histidine 131 each contribute to the Zn(2+) site.

The protein belongs to the endoribonuclease YbeY family. Zn(2+) is required as a cofactor.

It localises to the cytoplasm. Functionally, single strand-specific metallo-endoribonuclease involved in late-stage 70S ribosome quality control and in maturation of the 3' terminus of the 16S rRNA. The sequence is that of Endoribonuclease YbeY from Xanthomonas oryzae pv. oryzae (strain MAFF 311018).